The sequence spans 132 residues: NADH-quinone oxidoreductase subunit I 1 (132 aa).

4Fe-4S ferredoxin-type domains are found at residues 42 to 71 and 81 to 110; these read LKVS…VEAG and ERYE…MTGQ. [4Fe-4S] cluster is bound by residues Cys51, Cys54, Cys57, Cys61, Cys90, Cys93, Cys96, and Cys100.

This sequence belongs to the complex I 23 kDa subunit family. In terms of assembly, NDH-1 is composed of 14 different subunits. Subunits NuoA, H, J, K, L, M, N constitute the membrane sector of the complex. The cofactor is [4Fe-4S] cluster.

The protein resides in the cell inner membrane. The enzyme catalyses a quinone + NADH + 5 H(+)(in) = a quinol + NAD(+) + 4 H(+)(out). Functionally, NDH-1 shuttles electrons from NADH, via FMN and iron-sulfur (Fe-S) centers, to quinones in the respiratory chain. The immediate electron acceptor for the enzyme in this species is believed to be ubiquinone. Couples the redox reaction to proton translocation (for every two electrons transferred, four hydrogen ions are translocated across the cytoplasmic membrane), and thus conserves the redox energy in a proton gradient. The polypeptide is NADH-quinone oxidoreductase subunit I 1 (Geobacter sulfurreducens (strain ATCC 51573 / DSM 12127 / PCA)).